Here is a 228-residue protein sequence, read N- to C-terminus: Delta-type opioid receptor (228 aa).

A helical transmembrane segment spans residues 1 to 3; it reads GIV. Topologically, residues 4–13 are cytoplasmic; the sequence is RYTKMKTATN. A helical transmembrane segment spans residues 14–38; it reads IYIFNLALADALATSTLPFQSAKYL. The Extracellular portion of the chain corresponds to 39-50; sequence METWPFGELLCK. A disulfide bridge links C49 with C126. A helical transmembrane segment spans residues 51 to 72; that stretch reads AVLSIDYYNMFTSIFTLTMMSV. At 73 to 91 the chain is on the cytoplasmic side; sequence DRYIAVCHPVKALDFRTPA. Residues 92 to 114 form a helical membrane-spanning segment; the sequence is KAKLINICIWVLASGVGVPIMVM. Over 115–134 the chain is Extracellular; the sequence is AVTRPRDGAVVCMLQFPSPS. A helical membrane pass occupies residues 135–166; that stretch reads WYWDTVTKICVFLFAFVVPILVITVCYGLMLL. At 167 to 189 the chain is on the cytoplasmic side; it reads RLRSVRLLSGSKEKDRSLRRITR. Residues 190–212 form a helical membrane-spanning segment; it reads MVLVVVGAFVVCWAPIHIFVIVW. The Extracellular portion of the chain corresponds to 213–227; that stretch reads TLVDIDRRDPLVVAA.

The protein belongs to the G-protein coupled receptor 1 family. May form homooligomers. Forms a heterodimer with OPRM1. Interacts with GPRASP1. Interacts with RTP4; the interaction promotes cell surface localization of the OPRD1-OPRM1 heterodimer. Post-translationally, ubiquitinated. A basal ubiquitination seems not to be related to degradation. Ubiquitination is increased upon formation of OPRM1:OPRD1 oligomers leading to proteasomal degradation; the ubiquitination is diminished by RTP4. In terms of tissue distribution, detected in myenteric plexus and smooth muscle (at protein level). Detected in brain and intestine.

The protein resides in the cell membrane. In terms of biological role, G-protein coupled receptor that functions as a receptor for endogenous enkephalins and for a subset of other opioids. Ligand binding causes a conformation change that triggers signaling via guanine nucleotide-binding proteins (G proteins) and modulates the activity of down-stream effectors, such as adenylate cyclase. Signaling leads to the inhibition of adenylate cyclase activity. Inhibits neurotransmitter release by reducing calcium ion currents and increasing potassium ion conductance. Plays a role in the perception of pain and in opiate-mediated analgesia. Plays a role in developing analgesic tolerance to morphine. The sequence is that of Delta-type opioid receptor (OPRD1) from Sus scrofa (Pig).